The primary structure comprises 196 residues: Thymidine kinase (196 aa).

ATP is bound at residue Gly17–Thr24. Glu92 acts as the Proton acceptor in catalysis. Residue Phe121 coordinates substrate. Cys146 and Cys149 together coordinate Zn(2+). Leu166–Gly170 is a binding site for substrate. Residues Cys179 and Cys182 each contribute to the Zn(2+) site.

It belongs to the thymidine kinase family.

It catalyses the reaction thymidine + ATP = dTMP + ADP + H(+). Its function is as follows. Phosphorylates thymidine. ASFV replicates in the cytoplasm of infected cells and contains genes encoding a number of enzymes needed for DNA synthesis, including thymidine kinase. Important for growth in swine macrophages in vitro and is a virus virulence factor in swine. This chain is Thymidine kinase, found in Ornithodoros (relapsing fever ticks).